Consider the following 267-residue polypeptide: Urease accessory protein UreD 2 (267 aa).

Belongs to the UreD family. UreD, UreF and UreG form a complex that acts as a GTP-hydrolysis-dependent molecular chaperone, activating the urease apoprotein by helping to assemble the nickel containing metallocenter of UreC. The UreE protein probably delivers the nickel.

The protein resides in the cytoplasm. Functionally, required for maturation of urease via the functional incorporation of the urease nickel metallocenter. This Synechococcus sp. (strain JA-3-3Ab) (Cyanobacteria bacterium Yellowstone A-Prime) protein is Urease accessory protein UreD 2.